We begin with the raw amino-acid sequence, 1083 residues long: Error-prone DNA polymerase (1083 aa).

It belongs to the DNA polymerase type-C family. DnaE2 subfamily.

The protein resides in the cytoplasm. It carries out the reaction DNA(n) + a 2'-deoxyribonucleoside 5'-triphosphate = DNA(n+1) + diphosphate. Functionally, DNA polymerase involved in damage-induced mutagenesis and translesion synthesis (TLS). It is not the major replicative DNA polymerase. The sequence is that of Error-prone DNA polymerase from Xanthomonas oryzae pv. oryzae (strain KACC10331 / KXO85).